A 334-amino-acid chain; its full sequence is DNA-directed RNA polymerase subunit alpha (334 aa).

The interval 1–232 (MVREEIAVST…IDLFIPFLHA (232 aa)) is alpha N-terminal domain (alpha-NTD). Positions 268–334 (GIALKCIFID…ILQKHFTIDC (67 aa)) are alpha C-terminal domain (alpha-CTD).

This sequence belongs to the RNA polymerase alpha chain family. In plastids the minimal PEP RNA polymerase catalytic core is composed of four subunits: alpha, beta, beta', and beta''. When a (nuclear-encoded) sigma factor is associated with the core the holoenzyme is formed, which can initiate transcription.

It is found in the plastid. Its subcellular location is the chloroplast. It carries out the reaction RNA(n) + a ribonucleoside 5'-triphosphate = RNA(n+1) + diphosphate. Functionally, DNA-dependent RNA polymerase catalyzes the transcription of DNA into RNA using the four ribonucleoside triphosphates as substrates. This chain is DNA-directed RNA polymerase subunit alpha, found in Chloranthus spicatus (Chulantree).